Reading from the N-terminus, the 131-residue chain is Large ribosomal subunit protein bL12c (131 aa).

The tract at residues 107–131 (QGVSKDDAEASKKQLEDAGAKVKIS) is disordered. The span at 110 to 131 (SKDDAEASKKQLEDAGAKVKIS) shows a compositional bias: basic and acidic residues.

This sequence belongs to the bacterial ribosomal protein bL12 family. Homodimer. Part of the ribosomal stalk of the 50S ribosomal subunit. Forms a multimeric L10(L12)X complex, where L10 forms an elongated spine to which 2 to 4 L12 dimers bind in a sequential fashion. Binds GTP-bound translation factors.

Its subcellular location is the plastid. The protein resides in the chloroplast. In terms of biological role, forms part of the ribosomal stalk which helps the ribosome interact with GTP-bound translation factors. Is thus essential for accurate translation. The chain is Large ribosomal subunit protein bL12c from Chlorella vulgaris (Green alga).